The primary structure comprises 370 residues: Probable G-protein coupled receptor 85 (370 aa).

At 1–25 the chain is on the extracellular side; that stretch reads MANYSHAADNILQNLSPLTAFLKLT. Asn-3 carries an N-linked (GlcNAc...) asparagine glycan. Residues 26 to 46 traverse the membrane as a helical segment; sequence SLGFIIGVSVVGNLLISILLA. Residues 47-57 lie on the Cytoplasmic side of the membrane; that stretch reads KDKTLHRAPYY. Residues 58–78 traverse the membrane as a helical segment; it reads FLLDLCCSDILRSAICFPFVF. The Extracellular portion of the chain corresponds to 79 to 96; that stretch reads NSVKNGSTWTYGTLTCKV. N-linked (GlcNAc...) asparagine glycosylation is present at Asn-83. Cys-94 and Cys-172 are disulfide-bonded. Residues 97–117 form a helical membrane-spanning segment; it reads IAFLGVLSCFHTAFMLFCISV. The Cytoplasmic portion of the chain corresponds to 118–137; that stretch reads TRYLAIAHHRFYTKRLTFWT. A helical membrane pass occupies residues 138 to 158; the sequence is CLAVICMVWTLSVAMAFPPVL. Topologically, residues 159 to 188 are extracellular; sequence DVGTYSFIREEDQCTFQHRSFRANDSLGFM. The N-linked (GlcNAc...) asparagine glycan is linked to Asn-182. A helical membrane pass occupies residues 189-209; sequence LLLALILLATQLVYLKLIFFV. Residues 210-286 lie on the Cytoplasmic side of the membrane; that stretch reads HDRRKMKPVQ…FKMEKRISRM (77 aa). Residues 287 to 307 form a helical membrane-spanning segment; that stretch reads FYIMTFLFLTLWGPYLVACYW. The Extracellular portion of the chain corresponds to 308-313; sequence RVFARG. A helical transmembrane segment spans residues 314–334; the sequence is PVVPGGFLTAAVWMSFAQAGI. The Cytoplasmic portion of the chain corresponds to 335 to 370; it reads NPFVCIFSNRELRRCFSTTLLYCRKSRLPREPYCVI.

Belongs to the G-protein coupled receptor 1 family. As to quaternary structure, interacts with DLG4 and DLG3.

The protein localises to the cell membrane. It is found in the endoplasmic reticulum. Functionally, orphan receptor. In Pongo abelii (Sumatran orangutan), this protein is Probable G-protein coupled receptor 85 (GPR85).